We begin with the raw amino-acid sequence, 441 residues long: Ribulose bisphosphate carboxylase large chain (441 aa).

Lysine 5 bears the N6,N6,N6-trimethyllysine mark. Residues asparagine 114 and threonine 164 each contribute to the substrate site. Lysine 166 (proton acceptor) is an active-site residue. Lysine 168 contacts substrate. Residues lysine 192, aspartate 194, and glutamate 195 each contribute to the Mg(2+) site. Lysine 192 carries the post-translational modification N6-carboxylysine. Residue histidine 285 is the Proton acceptor of the active site. Residues arginine 286, histidine 318, and serine 370 each coordinate substrate.

This sequence belongs to the RuBisCO large chain family. Type I subfamily. Heterohexadecamer of 8 large chains and 8 small chains; disulfide-linked. The disulfide link is formed within the large subunit homodimers. Mg(2+) serves as cofactor. The disulfide bond which can form in the large chain dimeric partners within the hexadecamer appears to be associated with oxidative stress and protein turnover.

It localises to the plastid. Its subcellular location is the chloroplast. It carries out the reaction 2 (2R)-3-phosphoglycerate + 2 H(+) = D-ribulose 1,5-bisphosphate + CO2 + H2O. The catalysed reaction is D-ribulose 1,5-bisphosphate + O2 = 2-phosphoglycolate + (2R)-3-phosphoglycerate + 2 H(+). RuBisCO catalyzes two reactions: the carboxylation of D-ribulose 1,5-bisphosphate, the primary event in carbon dioxide fixation, as well as the oxidative fragmentation of the pentose substrate in the photorespiration process. Both reactions occur simultaneously and in competition at the same active site. The sequence is that of Ribulose bisphosphate carboxylase large chain from Begonia metallica x Begonia sanguinea.